The following is a 233-amino-acid chain: Putative 26S proteasome non-ATPase regulatory subunit 8 homolog B (233 aa).

Met1 carries the N-acetylmethionine modification. A PCI domain is found at 38-217 (DHYLISLSLN…APCKEIPSLQ (180 aa)).

It belongs to the proteasome subunit S14 family. In terms of assembly, component of the 19S regulatory particle (RP/PA700) lid subcomplex of the 26S proteasome. The 26S proteasome is composed of a core protease (CP), known as the 20S proteasome, capped at one or both ends by the 19S regulatory particle (RP/PA700). The RP/PA700 complex is composed of at least 17 different subunits in two subcomplexes, the base and the lid, which form the portions proximal and distal to the 20S proteolytic core, respectively. Interacts with UCH1 and UCH2.

Functionally, acts as a regulatory subunit of the 26S proteasome which is involved in the ATP-dependent degradation of ubiquitinated proteins. The chain is Putative 26S proteasome non-ATPase regulatory subunit 8 homolog B from Arabidopsis thaliana (Mouse-ear cress).